A 322-amino-acid chain; its full sequence is Ferredoxin--NADP reductase (322 aa).

L87, F119, D279, and T320 together coordinate FAD.

Belongs to the ferredoxin--NADP reductase type 2 family. As to quaternary structure, homodimer. The cofactor is FAD.

The enzyme catalyses 2 reduced [2Fe-2S]-[ferredoxin] + NADP(+) + H(+) = 2 oxidized [2Fe-2S]-[ferredoxin] + NADPH. The polypeptide is Ferredoxin--NADP reductase (Streptococcus suis (strain 98HAH33)).